A 467-amino-acid polypeptide reads, in one-letter code: Asparagine--tRNA ligase (467 aa).

Belongs to the class-II aminoacyl-tRNA synthetase family. Homodimer.

The protein resides in the cytoplasm. It catalyses the reaction tRNA(Asn) + L-asparagine + ATP = L-asparaginyl-tRNA(Asn) + AMP + diphosphate + H(+). The chain is Asparagine--tRNA ligase from Glaesserella parasuis serovar 5 (strain SH0165) (Haemophilus parasuis).